Here is a 120-residue protein sequence, read N- to C-terminus: Glycine cleavage system H protein (120 aa).

A Lipoyl-binding domain is found at 17 to 99; it reads VATVGITEHA…QGAAWFFKLK (83 aa). Residue K58 is modified to N6-lipoyllysine.

It belongs to the GcvH family. The glycine cleavage system is composed of four proteins: P, T, L and H. (R)-lipoate is required as a cofactor.

Its function is as follows. The glycine cleavage system catalyzes the degradation of glycine. The H protein shuttles the methylamine group of glycine from the P protein to the T protein. This Sinorhizobium medicae (strain WSM419) (Ensifer medicae) protein is Glycine cleavage system H protein.